We begin with the raw amino-acid sequence, 363 residues long: DNA primase small subunit PriS (363 aa).

Residues aspartate 105, aspartate 107, and aspartate 265 contribute to the active site.

The protein belongs to the eukaryotic-type primase small subunit family. As to quaternary structure, heterodimer of a small subunit (PriS) and a large subunit (PriL). Mg(2+) serves as cofactor. The cofactor is Mn(2+).

In terms of biological role, catalytic subunit of DNA primase, an RNA polymerase that catalyzes the synthesis of short RNA molecules used as primers for DNA polymerase during DNA replication. The small subunit contains the primase catalytic core and has DNA synthesis activity on its own. Binding to the large subunit stabilizes and modulates the activity, increasing the rate of DNA synthesis while decreasing the length of the DNA fragments, and conferring RNA synthesis capability. The DNA polymerase activity may enable DNA primase to also catalyze primer extension after primer synthesis. May also play a role in DNA repair. The sequence is that of DNA primase small subunit PriS from Methanococcus maripaludis (strain C7 / ATCC BAA-1331).